Here is a 282-residue protein sequence, read N- to C-terminus: Succinate dehydrogenase [ubiquinone] iron-sulfur subunit, mitochondrial (282 aa).

The 2Fe-2S ferredoxin-type domain maps to 43–131; it reads YRFNPEAPGA…STKIYPLPHM (89 aa). [2Fe-2S] cluster contacts are provided by C91, C96, C99, and C111. A 4Fe-4S ferredoxin-type domain is found at 174–204; sequence ERDRLDGLYECILCACCSTSCPSYWWNADKY. The [4Fe-4S] cluster site is built by C184, C187, and C190. C194 serves as a coordination point for [3Fe-4S] cluster. W199 contributes to the a ubiquinone binding site. C241 and C247 together coordinate [3Fe-4S] cluster. [4Fe-4S] cluster is bound at residue C251.

It belongs to the succinate dehydrogenase/fumarate reductase iron-sulfur protein family. As to quaternary structure, component of complex II composed of four subunits: a flavoprotein (FP), an iron-sulfur protein (IP), and a cytochrome b composed of a large and a small subunit. Requires [2Fe-2S] cluster as cofactor. [3Fe-4S] cluster is required as a cofactor. It depends on [4Fe-4S] cluster as a cofactor.

It localises to the mitochondrion inner membrane. The enzyme catalyses a quinone + succinate = fumarate + a quinol. It functions in the pathway carbohydrate metabolism; tricarboxylic acid cycle; fumarate from succinate (eukaryal route): step 1/1. Iron-sulfur protein (IP) subunit of succinate dehydrogenase (SDH) that is involved in complex II of the mitochondrial electron transport chain and is responsible for transferring electrons from succinate to ubiquinone (coenzyme Q). The chain is Succinate dehydrogenase [ubiquinone] iron-sulfur subunit, mitochondrial from Caenorhabditis briggsae.